A 252-amino-acid polypeptide reads, in one-letter code: Auxin-induced in root cultures protein 12 (252 aa).

The signal sequence occupies residues 1-25; the sequence is MASSSSSLLILAVACFVSLISPAIS. One can recognise a DOMON domain in the interval 49–165; that stretch reads LNSYLHYTYN…DSVNQVWQIG (117 aa). Residues asparagine 58 and asparagine 61 are each glycosylated (N-linked (GlcNAc...) asparagine). Methionine 91 serves as a coordination point for heme. Residues asparagine 114 and asparagine 167 are each glycosylated (N-linked (GlcNAc...) asparagine). Histidine 176 provides a ligand contact to heme. The tract at residues 193–224 is disordered; that stretch reads EDAAPGSAPSPGSAPAPGTSGSTTPGTAAGGP. Positions 195 to 219 are enriched in low complexity; sequence AAPGSAPSPGSAPAPGTSGSTTPGT. A lipid anchor (GPI-anchor amidated asparagine) is attached at asparagine 226. The propeptide at 227-252 is removed in mature form; sequence AGSLTRNVNFGVNLGILVLLGSIFIF.

The cofactor is heme.

Its subcellular location is the cell membrane. One-heme-containing cytochrome. This chain is Auxin-induced in root cultures protein 12 (AIR12), found in Arabidopsis thaliana (Mouse-ear cress).